We begin with the raw amino-acid sequence, 241 residues long: Ribonuclease 3 (241 aa).

The RNase III domain maps to 8 to 137 (LTLLKNRLGI…LLGAVYLDQG (130 aa)). Glu50 is a Mg(2+) binding site. The active site involves Asp54. Asp123 and Glu126 together coordinate Mg(2+). Glu126 is a catalytic residue. Positions 164 to 233 (DYKTELQELV…AKKALMKSDL (70 aa)) constitute a DRBM domain. Residues 214 to 241 (RSKKEAEQQAAKKALMKSDLGSACNHKK) form a disordered region.

It belongs to the ribonuclease III family. Homodimer. It depends on Mg(2+) as a cofactor.

It localises to the cytoplasm. The enzyme catalyses Endonucleolytic cleavage to 5'-phosphomonoester.. Functionally, digests double-stranded RNA. Involved in the processing of primary rRNA transcript to yield the immediate precursors to the large and small rRNAs (23S and 16S). Processes some mRNAs, and tRNAs when they are encoded in the rRNA operon. Processes pre-crRNA and tracrRNA of type II CRISPR loci if present in the organism. The chain is Ribonuclease 3 from Pelotomaculum thermopropionicum (strain DSM 13744 / JCM 10971 / SI).